The sequence spans 574 residues: Proline--tRNA ligase (574 aa).

The protein belongs to the class-II aminoacyl-tRNA synthetase family. ProS type 1 subfamily. In terms of assembly, homodimer.

It localises to the cytoplasm. It catalyses the reaction tRNA(Pro) + L-proline + ATP = L-prolyl-tRNA(Pro) + AMP + diphosphate. Its function is as follows. Catalyzes the attachment of proline to tRNA(Pro) in a two-step reaction: proline is first activated by ATP to form Pro-AMP and then transferred to the acceptor end of tRNA(Pro). As ProRS can inadvertently accommodate and process non-cognate amino acids such as alanine and cysteine, to avoid such errors it has two additional distinct editing activities against alanine. One activity is designated as 'pretransfer' editing and involves the tRNA(Pro)-independent hydrolysis of activated Ala-AMP. The other activity is designated 'posttransfer' editing and involves deacylation of mischarged Ala-tRNA(Pro). The misacylated Cys-tRNA(Pro) is not edited by ProRS. This is Proline--tRNA ligase from Nautilia profundicola (strain ATCC BAA-1463 / DSM 18972 / AmH).